The primary structure comprises 324 residues: 26S proteasome non-ATPase regulatory subunit 7 (324 aa).

An MPN domain is found at valine 9–valine 144. Lysine 180 participates in a covalent cross-link: Glycyl lysine isopeptide (Lys-Gly) (interchain with G-Cter in ubiquitin). N6-acetyllysine is present on residues lysine 204, lysine 214, lysine 316, and lysine 317. Residues alanine 281–lysine 324 are disordered.

It belongs to the peptidase M67A family. As to quaternary structure, component of the 19S proteasome regulatory particle complex. The 26S proteasome consists of a 20S core particle (CP) and two 19S regulatory subunits (RP). The regulatory particle is made of a lid composed of 9 subunits including PSMD7, a base containing 6 ATPases and few additional components. Within the complex, PSMD7 interacts with subunit PSMD4 through their respective MPN domain. Interacts with TRIM5.

Functionally, component of the 26S proteasome, a multiprotein complex involved in the ATP-dependent degradation of ubiquitinated proteins. This complex plays a key role in the maintenance of protein homeostasis by removing misfolded or damaged proteins, which could impair cellular functions, and by removing proteins whose functions are no longer required. Therefore, the proteasome participates in numerous cellular processes, including cell cycle progression, apoptosis, or DNA damage repair. This is 26S proteasome non-ATPase regulatory subunit 7 (PSMD7) from Homo sapiens (Human).